A 460-amino-acid polypeptide reads, in one-letter code: Bifunctional protein GlmU (460 aa).

Residues 1–232 (MENVAAIILA…SDEIMGVNDR (232 aa)) are pyrophosphorylase. Residues 9–12 (LAAG), Lys-23, Gln-75, and 80–81 (GT) each bind UDP-N-acetyl-alpha-D-glucosamine. Mg(2+) is bound at residue Asp-105. Positions 142, 157, 172, and 230 each coordinate UDP-N-acetyl-alpha-D-glucosamine. Asn-230 is a Mg(2+) binding site. Positions 233-253 (AQLAQAARILRRRINRDLMLS) are linker. Residues 254–460 (GVSLVDPEQT…GWRIRMKKKT (207 aa)) are N-acetyltransferase. UDP-N-acetyl-alpha-D-glucosamine-binding residues include Arg-336 and Lys-354. His-366 functions as the Proton acceptor in the catalytic mechanism. Residues Tyr-369 and Asn-380 each coordinate UDP-N-acetyl-alpha-D-glucosamine. Acetyl-CoA contacts are provided by residues 389–390 (NY), Ser-408, Ala-426, and Arg-443.

The protein in the N-terminal section; belongs to the N-acetylglucosamine-1-phosphate uridyltransferase family. It in the C-terminal section; belongs to the transferase hexapeptide repeat family. As to quaternary structure, homotrimer. Mg(2+) serves as cofactor.

The protein resides in the cytoplasm. The enzyme catalyses alpha-D-glucosamine 1-phosphate + acetyl-CoA = N-acetyl-alpha-D-glucosamine 1-phosphate + CoA + H(+). It carries out the reaction N-acetyl-alpha-D-glucosamine 1-phosphate + UTP + H(+) = UDP-N-acetyl-alpha-D-glucosamine + diphosphate. Its pathway is nucleotide-sugar biosynthesis; UDP-N-acetyl-alpha-D-glucosamine biosynthesis; N-acetyl-alpha-D-glucosamine 1-phosphate from alpha-D-glucosamine 6-phosphate (route II): step 2/2. It functions in the pathway nucleotide-sugar biosynthesis; UDP-N-acetyl-alpha-D-glucosamine biosynthesis; UDP-N-acetyl-alpha-D-glucosamine from N-acetyl-alpha-D-glucosamine 1-phosphate: step 1/1. The protein operates within bacterial outer membrane biogenesis; LPS lipid A biosynthesis. Catalyzes the last two sequential reactions in the de novo biosynthetic pathway for UDP-N-acetylglucosamine (UDP-GlcNAc). The C-terminal domain catalyzes the transfer of acetyl group from acetyl coenzyme A to glucosamine-1-phosphate (GlcN-1-P) to produce N-acetylglucosamine-1-phosphate (GlcNAc-1-P), which is converted into UDP-GlcNAc by the transfer of uridine 5-monophosphate (from uridine 5-triphosphate), a reaction catalyzed by the N-terminal domain. This chain is Bifunctional protein GlmU, found in Pelobacter propionicus (strain DSM 2379 / NBRC 103807 / OttBd1).